The primary structure comprises 480 residues: Serralysin (480 aa).

H181 lines the Zn(2+) pocket. E182 is an active-site residue. H185 and H191 together coordinate Zn(2+). The Ca(2+) site is built by R260, D263, D292, G294, G295, D297, T334, and E336. Hemolysin-type calcium-binding repeat units follow at residues 339–356 and 357–374; these read IGGSGNDVLIGNDAANTL and KGGAGDDIIYGGLGADNL.

Belongs to the peptidase M10B family. It depends on Zn(2+) as a cofactor. Requires Ca(2+) as cofactor.

Its subcellular location is the secreted. The catalysed reaction is Preferential cleavage of bonds with hydrophobic residues in P1'.. The polypeptide is Serralysin (prtA) (Photorhabdus laumondii subsp. laumondii (strain DSM 15139 / CIP 105565 / TT01) (Photorhabdus luminescens subsp. laumondii)).